The following is a 75-amino-acid chain: Small ribosomal subunit protein bS18 (75 aa).

Belongs to the bacterial ribosomal protein bS18 family. Part of the 30S ribosomal subunit. Forms a tight heterodimer with protein bS6.

Functionally, binds as a heterodimer with protein bS6 to the central domain of the 16S rRNA, where it helps stabilize the platform of the 30S subunit. This is Small ribosomal subunit protein bS18 from Anaplasma marginale (strain St. Maries).